The primary structure comprises 501 residues: Ell-associated factor Eaf (501 aa).

Polar residues-rich tracts occupy residues 138 to 149 and 173 to 192; these read NMGQGQLHSQGA and ENSTMRISTKTKVSTGSRRN. Disordered stretches follow at residues 138 to 226 and 256 to 501; these read NMGQ…PAWD and GHAN…DDDD. 2 stretches are compositionally biased toward low complexity: residues 200–221 and 256–270; these read RNSPMQQSSPSRPVPVHRSPQS and GHANTSGSSTGSATG. Ser-202 bears the Phosphoserine mark. A compositionally biased stretch (polar residues) spans 271-283; the sequence is QTDFGSISSSSHI. Low complexity-rich tracts occupy residues 302-314 and 329-343; these read QRQSPPMAQQQQP and QQQRQRNSPQQQRPP. The span at 393 to 408 shows a compositional bias: acidic residues; the sequence is DSSDSDSGSDSDDSTE. 3 stretches are compositionally biased toward low complexity: residues 416 to 437, 455 to 471, and 483 to 501; these read QQPVYQNQNHQQQQMAQQHLNQ, QQQQQQMVPHQQQQKQQ, and NDLLQNDLQLSSNSSDDDD.

Belongs to the EAF family.

It is found in the nucleus. Functionally, promotes transcriptional elongation by Su(Tpl)/ELL. Essential for development. The chain is Ell-associated factor Eaf from Drosophila yakuba (Fruit fly).